Consider the following 438-residue polypeptide: Enolase (438 aa).

Glutamine 174 contributes to the (2R)-2-phosphoglycerate binding site. Glutamate 216 functions as the Proton donor in the catalytic mechanism. Mg(2+)-binding residues include aspartate 253, glutamate 297, and aspartate 324. (2R)-2-phosphoglycerate-binding residues include lysine 349, arginine 378, serine 379, and lysine 400. Residue lysine 349 is the Proton acceptor of the active site.

This sequence belongs to the enolase family. In terms of assembly, component of the RNA degradosome, a multiprotein complex involved in RNA processing and mRNA degradation. The cofactor is Mg(2+).

Its subcellular location is the cytoplasm. The protein localises to the secreted. The protein resides in the cell surface. The catalysed reaction is (2R)-2-phosphoglycerate = phosphoenolpyruvate + H2O. It participates in carbohydrate degradation; glycolysis; pyruvate from D-glyceraldehyde 3-phosphate: step 4/5. Functionally, catalyzes the reversible conversion of 2-phosphoglycerate (2-PG) into phosphoenolpyruvate (PEP). It is essential for the degradation of carbohydrates via glycolysis. The chain is Enolase from Psychrobacter sp. (strain PRwf-1).